The primary structure comprises 54 residues: MDIVKIICAILLPPLGVFLQVGIGKDFWINLLLTIFGLYILGLVHAIWVIARER.

Transmembrane regions (helical) follow at residues 3–23 (IVKI…QVGI) and 31–51 (LLLT…WVIA).

This sequence belongs to the UPF0057 (PMP3) family.

It is found in the cell membrane. In Synechocystis sp. (strain ATCC 27184 / PCC 6803 / Kazusa), this protein is UPF0057 membrane protein ssr1169.